A 588-amino-acid polypeptide reads, in one-letter code: L-fucose isomerase (588 aa).

Residues glutamate 335 and aspartate 359 each act as proton acceptor in the active site. Glutamate 335, aspartate 359, and histidine 525 together coordinate Mn(2+).

Belongs to the L-fucose isomerase family. Mn(2+) is required as a cofactor.

The protein localises to the cytoplasm. It carries out the reaction L-fucose = L-fuculose. Its pathway is carbohydrate degradation; L-fucose degradation; L-lactaldehyde and glycerone phosphate from L-fucose: step 1/3. Functionally, converts the aldose L-fucose into the corresponding ketose L-fuculose. This is L-fucose isomerase from Streptococcus pneumoniae (strain Hungary19A-6).